We begin with the raw amino-acid sequence, 117 residues long: Large ribosomal subunit protein uL18 (117 aa).

The protein belongs to the universal ribosomal protein uL18 family. In terms of assembly, part of the 50S ribosomal subunit; part of the 5S rRNA/L5/L18/L25 subcomplex. Contacts the 5S and 23S rRNAs.

This is one of the proteins that bind and probably mediate the attachment of the 5S RNA into the large ribosomal subunit, where it forms part of the central protuberance. This Nitrosococcus oceani (strain ATCC 19707 / BCRC 17464 / JCM 30415 / NCIMB 11848 / C-107) protein is Large ribosomal subunit protein uL18.